A 360-amino-acid chain; its full sequence is DNA integrity scanning protein DisA (360 aa).

Residues 11-149 enclose the DAC domain; that stretch reads ELDLSSILQF…ENMKYTLKDI (139 aa). Residues G78, L96, and 109 to 113 each bind ATP; that span reads MRHRT.

Belongs to the DisA family. In terms of assembly, homooligomer. Interacts with RadA. Mg(2+) serves as cofactor.

Its subcellular location is the cytoplasm. It catalyses the reaction 2 ATP = 3',3'-c-di-AMP + 2 diphosphate. With respect to regulation, diadenylate cyclase (DAC) activity is inhibited 2-fold by Holliday junction (HJ) DNA, further addition of RecG inhibits DAC activity 11-fold; RecG may relocate DisA from the HJ. DAC is inhibited by the interaction with RadA. Diadenylate cyclase activity is not affected by ssDNA or dsDNA, but three- and four-way junctions strongly inhibit the activity of DisA, suggesting the enzyme is regulated by branched nucleic acids. Participates in a DNA-damage check-point that is active prior to asymmetric division when DNA is damaged. Forms globular foci that rapidly scan along the chromosomes during sporulation, searching for lesions. Its ability to scan through the chromosome rapidly is due to its non-specific DNA-binding. When a lesion is present, DisA pauses at the lesion site. This triggers a cellular response that culminates in a temporary block in sporulation initiation. It is required, at least partially, to inhibit the activity of the transcription factor spo0A, which controls, among others, early sporulation genes. In B.subtilis c-di-AMP is a second messenger that mediates growth, DNA repair and cell wall homeostasis; it is toxic when present in excess. Limits the replication fork reggression activity of RecG; DisA inhibits the ATPase activity of RecG. By limiting RecG-mediated fork regression, DisA provides time for removal of potentially lethal DNA lesions. In terms of biological role, one of 3 paralogous diadenylate cyclases (DAC) in this bacteria. Has diadenylate cyclase activity, catalyzing the condensation of 2 ATP molecules into cyclic di-AMP (c-di-AMP). c-di-AMP acts as a signaling molecule that couples DNA integrity with progression of sporulation. The rise in c-di-AMP level generated by DisA while scanning the chromosome operates as a positive signal that advances sporulation; upon encountering a lesion, the DisA focus arrests at the damaged site and halts c-di-AMP synthesis. Does not convert GTP to c-di-GMP. In Bacillus subtilis (strain 168), this protein is DNA integrity scanning protein DisA.